Consider the following 280-residue polypeptide: Tryptophan synthase alpha chain (280 aa).

Active-site proton acceptor residues include E49 and D60.

The protein belongs to the TrpA family. In terms of assembly, tetramer of two alpha and two beta chains.

It catalyses the reaction (1S,2R)-1-C-(indol-3-yl)glycerol 3-phosphate + L-serine = D-glyceraldehyde 3-phosphate + L-tryptophan + H2O. Its pathway is amino-acid biosynthesis; L-tryptophan biosynthesis; L-tryptophan from chorismate: step 5/5. Functionally, the alpha subunit is responsible for the aldol cleavage of indoleglycerol phosphate to indole and glyceraldehyde 3-phosphate. This Corynebacterium glutamicum (strain ATCC 13032 / DSM 20300 / JCM 1318 / BCRC 11384 / CCUG 27702 / LMG 3730 / NBRC 12168 / NCIMB 10025 / NRRL B-2784 / 534) protein is Tryptophan synthase alpha chain.